The chain runs to 423 residues: Calcium up-regulated protein A (423 aa).

Residues 1–19 (MINIEDISKSSNESEEKQL) show a composition bias toward basic and acidic residues. The interval 1-27 (MINIEDISKSSNESEEKQLKSTSTSSK) is disordered. Ricin B-type lectin domains are found at residues 27 to 147 (KPKY…WTTF) and 118 to 251 (QGNG…WGIN).

Belongs to the cup family.

Its subcellular location is the cytoplasm. It localises to the membrane. May play an important role in stabilizing and/or regulating the cell membrane during Ca(2+) stress or certain stages of development. The protein is Calcium up-regulated protein A (cupA) of Dictyostelium discoideum (Social amoeba).